The sequence spans 132 residues: Precursor of CEP10 (132 aa).

A signal peptide spans 1-19; that stretch reads MKLFIIIVVTSLTISKVFD. A propeptide spanning residues 20–66 is cleaved from the precursor; it reads KTLVTIEARNLRKMDRHEHFNANEDFVEAKMLKKIDNKNNLNNRCIN. A hydroxyproline mark is found at P70 and P73. The propeptide occupies 82 to 91; it reads PKVINNKFTK. Hydroxyproline is present on residues P95, P98, and P102. A propeptide spanning residues 107–116 is cleaved from the precursor; it reads LRVVNNKFTN. Hydroxyproline is present on residues P120, P123, and P127. Residue P132 is a propeptide.

Belongs to the C-terminally encoded plant signaling peptide (CEP) family. Interacts with CEP receptors (e.g. CEPR1 and CEPR2). Post-translationally, the mature small signaling peptide is generated by proteolytic processing of the longer precursor.

Its subcellular location is the secreted. It localises to the extracellular space. The protein resides in the apoplast. In terms of biological role, extracellular signaling peptide that may regulate primary root growth rate and systemic nitrogen (N)-demand signaling. The chain is Precursor of CEP10 from Arabidopsis thaliana (Mouse-ear cress).